The chain runs to 485 residues: Choline/ethanolamine transporter flvcr2b (485 aa).

At 1-46 the chain is on the cytoplasmic side; it reads MDTRFNDINRVKMGDESKSVDGEVNDNTYYSKTDAEVNFEHRYTTP. A helical transmembrane segment spans residues 47-71; the sequence is ETRLYKKRWVIVCLFSSYSLCNSYQ. Choline-binding residues include asparagine 68 and tryptophan 72. The Extracellular portion of the chain corresponds to 72–89; that stretch reads WIQYGIINNIFMRFYGVD. The helical transmembrane segment at 90–117 threads the bilayer; it reads SFTIDWMSMIYMLTYIPLIFPVSWLLDK. At 118-119 the chain is on the cytoplasmic side; sequence KG. The chain crosses the membrane as a helical span at residues 120–139; it reads LRVIALVAAALNCAGTWIKV. Over 140-146 the chain is Extracellular; that stretch reads ASARPDL. Residues 147–175 traverse the membrane as a helical segment; sequence FPVTFLGQFTCSVAQVFILGMPSRIASVW. Residues glutamine 161 and leucine 165 each contribute to the choline site. Topologically, residues 176–180 are cytoplasmic; it reads FGSDE. Residues 181–206 form a helical membrane-spanning segment; the sequence is VSTACSIGVFGNQLGIAIGFLVPPIL. At 207–211 the chain is on the extracellular side; sequence VPNVD. The chain crosses the membrane as a helical span at residues 212–241; that stretch reads DLDELAAHIRVMFYITAGVATFLFVLVVIV. Over 242-277 the chain is Cytoplasmic; sequence FQERPEIPPTLAQAAARRISPESYSYTASILRLLRN. The chain crosses the membrane as a helical span at residues 278-308; sequence KAFILLVITYGLNVGCFYAVSTLLNRMIIEH. Position 295 (tyrosine 295) interacts with choline. The Extracellular portion of the chain corresponds to 309–312; sequence YPGE. A helical transmembrane segment spans residues 313–341; that stretch reads EVNAGRIGLTIVVAGMVGSLICGIWLDRS. Residues 342–343 are Cytoplasmic-facing; the sequence is KT. A helical membrane pass occupies residues 344-366; it reads YKQTTLAVYLMSLMGLVIYAFTL. The Extracellular segment spans residues 367-369; sequence DLH. Residues 370–399 traverse the membrane as a helical segment; that stretch reads HLWVVFITAGALGFFMTGYLPLGFEFAVEL. At 400 to 407 the chain is on the cytoplasmic side; sequence TYPESEGT. Residues 408–433 form a helical membrane-spanning segment; the sequence is SSGLLNCSAQVFGIIFTICQGKIMDS. Choline is bound at residue glutamine 417. The Extracellular segment spans residues 434-435; it reads FG. The helical transmembrane segment at 436–458 threads the bilayer; that stretch reads TLAGNLFLCAFLLIGTIITGCIK. The Cytoplasmic segment spans residues 459–485; sequence SDLRRQLANQQAQTADHLDTSPTQTRF.

The protein belongs to the major facilitator superfamily. Feline leukemia virus subgroup C receptor (TC 2.A.1.28.1) family.

It localises to the cell membrane. The protein localises to the mitochondrion membrane. Its subcellular location is the endoplasmic reticulum membrane. It carries out the reaction choline(out) = choline(in). It catalyses the reaction ethanolamine(in) = ethanolamine(out). The enzyme catalyses heme b(in) = heme b(out). Functionally, choline uniporter that specifically mediates choline uptake at the blood-brain-barrier. Responsible for the majority of choline uptake across the blood-brain-barrier from the circulation into the brain. Choline, a nutrient critical for brain development, is a precursor of phosphatidylcholine, as well as betaine. Also mediates transport of ethanolamine. Choline and ethanolamine transport is not coupled with proton transport and is exclusively driven by the choline gradient across the plasma membrane. Also acts as a heme b transporter. This Danio rerio (Zebrafish) protein is Choline/ethanolamine transporter flvcr2b.